Consider the following 259-residue polypeptide: Protein FAM220A (259 aa).

2 disordered regions span residues 1–44 and 131–154; these read MRDR…ADAP and LGGG…RVSR. The span at 138–152 shows a compositional bias: basic and acidic residues; that stretch reads TDGHRGQCPKGEPRV.

Interacts with transcriptional activator STAT3; the interaction occurs in both the nucleus and the cytoplasm, is enhanced by IL6 and promotes STAT3 dephosphorylation, leading to negative regulation of STAT3 transcriptional activator activity. Can interact with both unphosphorylated and phosphorylated STAT3 but interacts preferentially with phosphorylated STAT3 in the nucleus. Interacts with protein phosphatase PTPN2/TC45; this promotes interaction of PTPN2 with STAT3, leading to dephosphorylation of STAT3 by PTPN2.

It is found in the nucleus. The protein localises to the cytoplasm. Its subcellular location is the cytoplasmic vesicle. It localises to the secretory vesicle. The protein resides in the acrosome. Promotes dephosphorylation of transcriptional activator STAT3 by interacting with both STAT3 and protein phosphatase PTPN2. This promotes interaction of PTPN2 with STAT3 and mediates STAT3 dephosphorylation by PTPN2, leading to negative regulation of STAT3 transcriptional activator activity. May be required for spermiogenesis or sperm function. This Homo sapiens (Human) protein is Protein FAM220A.